The primary structure comprises 268 residues: Ribosomal RNA small subunit methyltransferase A (268 aa).

The S-adenosyl-L-methionine site is built by Asn-18, Leu-20, Gly-45, Glu-66, Asp-91, and Asn-112.

This sequence belongs to the class I-like SAM-binding methyltransferase superfamily. rRNA adenine N(6)-methyltransferase family. RsmA subfamily.

It is found in the cytoplasm. It catalyses the reaction adenosine(1518)/adenosine(1519) in 16S rRNA + 4 S-adenosyl-L-methionine = N(6)-dimethyladenosine(1518)/N(6)-dimethyladenosine(1519) in 16S rRNA + 4 S-adenosyl-L-homocysteine + 4 H(+). In terms of biological role, specifically dimethylates two adjacent adenosines (A1518 and A1519) in the loop of a conserved hairpin near the 3'-end of 16S rRNA in the 30S particle. May play a critical role in biogenesis of 30S subunits. The protein is Ribosomal RNA small subunit methyltransferase A of Shewanella baltica (strain OS185).